A 323-amino-acid chain; its full sequence is ADP-L-glycero-D-manno-heptose-6-epimerase (323 aa).

NADP(+)-binding positions include 10–11 (FI), 31–32 (DN), Lys-38, Arg-53, 75–79 (MGACS), and Asn-92. Residue Tyr-143 is the Proton acceptor of the active site. Residue Lys-147 participates in NADP(+) binding. Asn-170 is a binding site for substrate. 2 residues coordinate NADP(+): Val-171 and Lys-179. Lys-179 serves as the catalytic Proton acceptor. Substrate contacts are provided by residues Asp-181, Lys-188, 202-205 (FRSC), Arg-216, and Tyr-281.

It belongs to the NAD(P)-dependent epimerase/dehydratase family. HldD subfamily. In terms of assembly, homopentamer. Requires NADP(+) as cofactor.

The enzyme catalyses ADP-D-glycero-beta-D-manno-heptose = ADP-L-glycero-beta-D-manno-heptose. It participates in nucleotide-sugar biosynthesis; ADP-L-glycero-beta-D-manno-heptose biosynthesis; ADP-L-glycero-beta-D-manno-heptose from D-glycero-beta-D-manno-heptose 7-phosphate: step 4/4. Catalyzes the interconversion between ADP-D-glycero-beta-D-manno-heptose and ADP-L-glycero-beta-D-manno-heptose via an epimerization at carbon 6 of the heptose. The protein is ADP-L-glycero-D-manno-heptose-6-epimerase of Nitratidesulfovibrio vulgaris (strain DP4) (Desulfovibrio vulgaris).